A 450-amino-acid chain; its full sequence is Phosphoglucosamine mutase (450 aa).

Residue serine 101 is the Phosphoserine intermediate of the active site. Serine 101, aspartate 240, aspartate 242, and aspartate 244 together coordinate Mg(2+). Serine 101 bears the Phosphoserine mark.

The protein belongs to the phosphohexose mutase family. The cofactor is Mg(2+). Post-translationally, activated by phosphorylation.

The catalysed reaction is alpha-D-glucosamine 1-phosphate = D-glucosamine 6-phosphate. In terms of biological role, catalyzes the conversion of glucosamine-6-phosphate to glucosamine-1-phosphate. This chain is Phosphoglucosamine mutase, found in Streptococcus pneumoniae (strain JJA).